We begin with the raw amino-acid sequence, 152 residues long: Deoxyuridine 5'-triphosphate nucleotidohydrolase (152 aa).

Substrate contacts are provided by residues 71-73 (RSG), N84, 88-90 (LID), and M98.

The protein belongs to the dUTPase family. The cofactor is Mg(2+).

The enzyme catalyses dUTP + H2O = dUMP + diphosphate + H(+). It functions in the pathway pyrimidine metabolism; dUMP biosynthesis; dUMP from dCTP (dUTP route): step 2/2. In terms of biological role, this enzyme is involved in nucleotide metabolism: it produces dUMP, the immediate precursor of thymidine nucleotides and it decreases the intracellular concentration of dUTP so that uracil cannot be incorporated into DNA. The sequence is that of Deoxyuridine 5'-triphosphate nucleotidohydrolase from Shewanella amazonensis (strain ATCC BAA-1098 / SB2B).